Here is a 684-residue protein sequence, read N- to C-terminus: Glycine--tRNA ligase beta subunit (684 aa).

This sequence belongs to the class-II aminoacyl-tRNA synthetase family. Tetramer of two alpha and two beta subunits.

The protein localises to the cytoplasm. The catalysed reaction is tRNA(Gly) + glycine + ATP = glycyl-tRNA(Gly) + AMP + diphosphate. This chain is Glycine--tRNA ligase beta subunit, found in Stutzerimonas stutzeri (strain A1501) (Pseudomonas stutzeri).